A 72-amino-acid polypeptide reads, in one-letter code: Exodeoxyribonuclease 7 small subunit (72 aa).

The protein belongs to the XseB family. As to quaternary structure, heterooligomer composed of large and small subunits.

The protein localises to the cytoplasm. It catalyses the reaction Exonucleolytic cleavage in either 5'- to 3'- or 3'- to 5'-direction to yield nucleoside 5'-phosphates.. Its function is as follows. Bidirectionally degrades single-stranded DNA into large acid-insoluble oligonucleotides, which are then degraded further into small acid-soluble oligonucleotides. This is Exodeoxyribonuclease 7 small subunit from Clostridium kluyveri (strain NBRC 12016).